A 451-amino-acid polypeptide reads, in one-letter code: Trigger factor (451 aa).

A PPIase FKBP-type domain is found at 165 to 250 (DDKLTIDFEG…LHQIQAREVL (86 aa)).

It belongs to the FKBP-type PPIase family. Tig subfamily.

Its subcellular location is the cytoplasm. The enzyme catalyses [protein]-peptidylproline (omega=180) = [protein]-peptidylproline (omega=0). Involved in protein export. Acts as a chaperone by maintaining the newly synthesized protein in an open conformation. Functions as a peptidyl-prolyl cis-trans isomerase. In Helicobacter acinonychis (strain Sheeba), this protein is Trigger factor.